The following is a 500-amino-acid chain: Na(+)/H(+) antiporter NhaB (500 aa).

Helical transmembrane passes span 11-31 (HGFLGQSPLWYKAVICLFLVL), 34-54 (LLLATIGPAAAGWALVIEFIF), 58-78 (MALKCYPLMPGGLLLIEALLL), 96-116 (VILLLMFMVAGIHFMKELLLF), 121-141 (ILLGVRSKAMLSLLFCVLSAF), 145-165 (FLDALTVTAVIISAAVGFYAV), 205-225 (LLMHGAVGTALGGVCTLVGEP), 241-261 (FLLKVAPVSIPVLGAGLLTCV), 311-331 (ILIICLGLHVAEVGLIGLMVI), 350-370 (FQDAMPFTSLLVVFFAVVAVI), 394-414 (MLYLANGLLSAISDNVFVATI), 450-470 (ATPNGQAAFLFLLTSAIAPLI), and 477-497 (MVWMALPYTVVMGGLGWWAVT).

It belongs to the NhaB Na(+)/H(+) (TC 2.A.34) antiporter family.

Its subcellular location is the cell inner membrane. It catalyses the reaction 2 Na(+)(in) + 3 H(+)(out) = 2 Na(+)(out) + 3 H(+)(in). Functionally, na(+)/H(+) antiporter that extrudes sodium in exchange for external protons. The sequence is that of Na(+)/H(+) antiporter NhaB from Pseudomonas putida (strain ATCC 700007 / DSM 6899 / JCM 31910 / BCRC 17059 / LMG 24140 / F1).